Here is a 329-residue protein sequence, read N- to C-terminus: Telomeric repeat-binding factor 2-interacting protein 1 (329 aa).

A BRCT domain is found at 63–86 (AVSTDYVVACVESQRRLPLDLYRH). A Myb-like domain is found at 94–153 (ASPRGRLPFTEAEDAALLRAVRERSGAPRVSGTALWKELECTGLTRHSWQAMRDRYLRHL). The tract at residues 179–206 (EFESSESGSDTSDTPDELPLQNGEGTFP) is disordered. Positions 313–329 (AKFGAENVARRVAFRKS) match the Nuclear localization signal motif.

Belongs to the RAP1 family. As to quaternary structure, homodimer. Component of the shelterin complex (telosome). Interacts with terf2; the interaction is direct.

It localises to the nucleus. The protein resides in the chromosome. The protein localises to the telomere. Functionally, acts both as a regulator of telomere function and as a transcription regulator. Involved in the regulation of telomere length and protection as a component of the shelterin complex (telosome). Does not bind DNA directly: recruited to telomeric double-stranded 5'-TTAGGG-3' repeats via its interaction with terf2. Independently of its function in telomeres, also acts as a transcription regulator: recruited to extratelomeric 5'-TTAGGG-3' sites via its association with terf2 or other factors, and regulates gene expression. This is Telomeric repeat-binding factor 2-interacting protein 1 (TERF2IP) from Gallus gallus (Chicken).